Here is a 374-residue protein sequence, read N- to C-terminus: Queuine tRNA-ribosyltransferase (374 aa).

The Proton acceptor role is filled by D91. Substrate is bound by residues D91–Y95, D145, Q189, and G216. Residues G247–D253 are RNA binding. Residue D266 is the Nucleophile of the active site. The segment at T271–R275 is RNA binding; important for wobble base 34 recognition. Zn(2+) contacts are provided by C304, C306, C309, and H335.

This sequence belongs to the queuine tRNA-ribosyltransferase family. As to quaternary structure, homodimer. Within each dimer, one monomer is responsible for RNA recognition and catalysis, while the other monomer binds to the replacement base PreQ1. The cofactor is Zn(2+).

The catalysed reaction is 7-aminomethyl-7-carbaguanine + guanosine(34) in tRNA = 7-aminomethyl-7-carbaguanosine(34) in tRNA + guanine. It participates in tRNA modification; tRNA-queuosine biosynthesis. Catalyzes the base-exchange of a guanine (G) residue with the queuine precursor 7-aminomethyl-7-deazaguanine (PreQ1) at position 34 (anticodon wobble position) in tRNAs with GU(N) anticodons (tRNA-Asp, -Asn, -His and -Tyr). Catalysis occurs through a double-displacement mechanism. The nucleophile active site attacks the C1' of nucleotide 34 to detach the guanine base from the RNA, forming a covalent enzyme-RNA intermediate. The proton acceptor active site deprotonates the incoming PreQ1, allowing a nucleophilic attack on the C1' of the ribose to form the product. After dissociation, two additional enzymatic reactions on the tRNA convert PreQ1 to queuine (Q), resulting in the hypermodified nucleoside queuosine (7-(((4,5-cis-dihydroxy-2-cyclopenten-1-yl)amino)methyl)-7-deazaguanosine). The chain is Queuine tRNA-ribosyltransferase from Leptospira interrogans serogroup Icterohaemorrhagiae serovar Lai (strain 56601).